We begin with the raw amino-acid sequence, 206 residues long: Regulatory protein CysR (206 aa).

Residues 120–196 (RRAEAKLASL…DRALIVRYPE (77 aa)) enclose the HTH crp-type domain. The segment at residues 156–175 (HQVIAELSGSTRVTTTRLLG) is a DNA-binding region (H-T-H motif).

The protein resides in the cytoplasm. Probably regulates the expression of genes from the sulfate permease complex. This is Regulatory protein CysR (cysR) from Synechococcus elongatus (strain ATCC 33912 / PCC 7942 / FACHB-805) (Anacystis nidulans R2).